The primary structure comprises 182 residues: Large ribosomal subunit protein uL6 (182 aa).

This sequence belongs to the universal ribosomal protein uL6 family. As to quaternary structure, part of the 50S ribosomal subunit.

Its function is as follows. This protein binds to the 23S rRNA, and is important in its secondary structure. It is located near the subunit interface in the base of the L7/L12 stalk, and near the tRNA binding site of the peptidyltransferase center. This Dehalococcoides mccartyi (strain CBDB1) protein is Large ribosomal subunit protein uL6.